The primary structure comprises 122 residues: MIQPLSKLVVADNTGAKEIMCIRVLGGSKHRYGTVGDLIVASVKKAEPNAAVKKGDVVYAVIVRTKKEYRRKDGSYIKFDDNAAVLVTPQGQPRGTRIFGPVARELREKHYMRIISLAPEVW.

It belongs to the universal ribosomal protein uL14 family. As to quaternary structure, part of the 50S ribosomal subunit. Forms a cluster with proteins L3 and L19. In the 70S ribosome, L14 and L19 interact and together make contacts with the 16S rRNA in bridges B5 and B8.

Binds to 23S rRNA. Forms part of two intersubunit bridges in the 70S ribosome. The protein is Large ribosomal subunit protein uL14 of Thermomicrobium roseum (strain ATCC 27502 / DSM 5159 / P-2).